The following is a 336-amino-acid chain: Holliday junction branch migration complex subunit RuvB (336 aa).

Residues 4-184 (ADRLIQPQVQ…FGIPLRLEFY (181 aa)) form a large ATPase domain (RuvB-L) region. Residues Arg24, Gly65, Lys68, Thr69, Thr70, 131–133 (EDY), Arg174, Tyr184, and Arg221 each bind ATP. Thr69 provides a ligand contact to Mg(2+). The small ATPAse domain (RuvB-S) stretch occupies residues 185 to 255 (NVADLTTIVT…VAEYALDLLD (71 aa)). Residues 258 to 336 (DQGFDYLDRK…HFSLVRPEKA (79 aa)) form a head domain (RuvB-H) region. The DNA site is built by Arg294, Arg313, and Arg318.

It belongs to the RuvB family. In terms of assembly, homohexamer. Forms an RuvA(8)-RuvB(12)-Holliday junction (HJ) complex. HJ DNA is sandwiched between 2 RuvA tetramers; dsDNA enters through RuvA and exits via RuvB. An RuvB hexamer assembles on each DNA strand where it exits the tetramer. Each RuvB hexamer is contacted by two RuvA subunits (via domain III) on 2 adjacent RuvB subunits; this complex drives branch migration. In the full resolvosome a probable DNA-RuvA(4)-RuvB(12)-RuvC(2) complex forms which resolves the HJ.

The protein resides in the cytoplasm. The catalysed reaction is ATP + H2O = ADP + phosphate + H(+). The RuvA-RuvB-RuvC complex processes Holliday junction (HJ) DNA during genetic recombination and DNA repair, while the RuvA-RuvB complex plays an important role in the rescue of blocked DNA replication forks via replication fork reversal (RFR). RuvA specifically binds to HJ cruciform DNA, conferring on it an open structure. The RuvB hexamer acts as an ATP-dependent pump, pulling dsDNA into and through the RuvAB complex. RuvB forms 2 homohexamers on either side of HJ DNA bound by 1 or 2 RuvA tetramers; 4 subunits per hexamer contact DNA at a time. Coordinated motions by a converter formed by DNA-disengaged RuvB subunits stimulates ATP hydrolysis and nucleotide exchange. Immobilization of the converter enables RuvB to convert the ATP-contained energy into a lever motion, pulling 2 nucleotides of DNA out of the RuvA tetramer per ATP hydrolyzed, thus driving DNA branch migration. The RuvB motors rotate together with the DNA substrate, which together with the progressing nucleotide cycle form the mechanistic basis for DNA recombination by continuous HJ branch migration. Branch migration allows RuvC to scan DNA until it finds its consensus sequence, where it cleaves and resolves cruciform DNA. The sequence is that of Holliday junction branch migration complex subunit RuvB from Shewanella frigidimarina (strain NCIMB 400).